The chain runs to 344 residues: Uroporphyrinogen decarboxylase (344 aa).

Substrate-binding positions include 23 to 27, Asp73, Tyr149, Thr204, and His321; that span reads RQAGR.

This sequence belongs to the uroporphyrinogen decarboxylase family. In terms of assembly, homodimer.

The protein localises to the cytoplasm. The enzyme catalyses uroporphyrinogen III + 4 H(+) = coproporphyrinogen III + 4 CO2. Its pathway is porphyrin-containing compound metabolism; protoporphyrin-IX biosynthesis; coproporphyrinogen-III from 5-aminolevulinate: step 4/4. Its function is as follows. Catalyzes the decarboxylation of four acetate groups of uroporphyrinogen-III to yield coproporphyrinogen-III. The sequence is that of Uroporphyrinogen decarboxylase from Francisella tularensis subsp. holarctica (strain LVS).